Here is a 453-residue protein sequence, read N- to C-terminus: Gamma-aminobutyric acid receptor subunit alpha-6 (453 aa).

An N-terminal signal peptide occupies residues 1–19 (MASSLPWLCIILWLENALG). Over 20 to 243 (KLEVEGNFYS…FHLQRKMGYF (224 aa)) the chain is Extracellular. A glycan (N-linked (GlcNAc...) asparagine) is linked at Asn-31. 4-aminobutanoate is bound at residue Arg-84. Asn-128 and Asn-141 each carry an N-linked (GlcNAc...) asparagine glycan. Position 147 (Thr-147) interacts with 4-aminobutanoate. A disulfide bridge connects residues Cys-156 and Cys-170. A helical transmembrane segment spans residues 244–264 (MIQIYTPCIMTVILSQVSFWI). The Cytoplasmic segment spans residues 265-270 (NKESVP). The chain crosses the membrane as a helical span at residues 271–290 (ARTVFGITTVLTMTTLSISA). Residues 291–304 (RHSLPKVSYATAMD) are Extracellular-facing. The chain crosses the membrane as a helical span at residues 305 to 325 (WFIAVCFAFVFSALIEFAAVN). The Cytoplasmic portion of the chain corresponds to 326-422 (YFTNLQTQKA…GTSKIDQYSR (97 aa)). The residue at position 403 (Thr-403) is a Phosphothreonine. Residues 423–443 (ILFPVAFAGFNLVYWVVYLSK) traverse the membrane as a helical segment. Residues 444–453 (DTMEVSSSVE) lie on the Extracellular side of the membrane.

It belongs to the ligand-gated ion channel (TC 1.A.9) family. Gamma-aminobutyric acid receptor (TC 1.A.9.5) subfamily. GABRA6 sub-subfamily. In terms of assembly, heteropentamer, formed by a combination of alpha (GABRA1-6), beta (GABRB1-3), gamma (GABRG1-3), delta (GABRD), epsilon (GABRE), rho (GABRR1-3), pi (GABRP) and theta (GABRQ) chains, each subunit exhibiting distinct physiological and pharmacological properties. Binds UBQLN1. Expressed in brain, in cerebellar granule cells.

It localises to the postsynaptic cell membrane. The protein localises to the cell membrane. It carries out the reaction chloride(in) = chloride(out). In terms of biological role, alpha subunit of the heteropentameric ligand-gated chloride channel gated by gamma-aminobutyric acid (GABA), a major inhibitory neurotransmitter in the brain. GABA-gated chloride channels, also named GABA(A) receptors (GABAAR), consist of five subunits arranged around a central pore and contain GABA active binding site(s) located at the alpha and beta subunit interface(s). When activated by GABA, GABAARs selectively allow the flow of chloride anions across the cell membrane down their electrochemical gradient. Alpha-6/GABRA6 subunits are found at both synaptic and extrasynaptic sites. Chloride influx into the postsynaptic neuron following GABAAR opening decreases the neuron ability to generate a new action potential, thereby reducing nerve transmission. Extrasynaptic alpha-6-containing receptors contribute to the tonic GABAergic inhibition. Alpha-6 subunits are also present on glutamatergic synapses. This Homo sapiens (Human) protein is Gamma-aminobutyric acid receptor subunit alpha-6.